The following is a 100-amino-acid chain: Aspartyl/glutamyl-tRNA(Asn/Gln) amidotransferase subunit C (100 aa).

It belongs to the GatC family. As to quaternary structure, heterotrimer of A, B and C subunits.

It carries out the reaction L-glutamyl-tRNA(Gln) + L-glutamine + ATP + H2O = L-glutaminyl-tRNA(Gln) + L-glutamate + ADP + phosphate + H(+). It catalyses the reaction L-aspartyl-tRNA(Asn) + L-glutamine + ATP + H2O = L-asparaginyl-tRNA(Asn) + L-glutamate + ADP + phosphate + 2 H(+). In terms of biological role, allows the formation of correctly charged Asn-tRNA(Asn) or Gln-tRNA(Gln) through the transamidation of misacylated Asp-tRNA(Asn) or Glu-tRNA(Gln) in organisms which lack either or both of asparaginyl-tRNA or glutaminyl-tRNA synthetases. The reaction takes place in the presence of glutamine and ATP through an activated phospho-Asp-tRNA(Asn) or phospho-Glu-tRNA(Gln). This Streptococcus pyogenes serotype M18 (strain MGAS8232) protein is Aspartyl/glutamyl-tRNA(Asn/Gln) amidotransferase subunit C.